Reading from the N-terminus, the 1048-residue chain is MMILWKRQRTLLKMLLMTLIMEETTTIKEEVFFMKKFVIILTISIAVLFAGCVSEEGSYEESKISEKSISSPLDIVPKSSEKVVYTKTEGFVDLLGENSEIVNAYKELIGKYGLSVDDIEYTIQADNTYVLKGYGLDEYKFMDELGLDYKEEKYNGANMLINENHNYAVAKYKNYLIHGNTEDVKRVIDTIKGDYPSITEKKEIKDMLSKVDDDYVIANIGRNYKGYYGAFIYLKGRNVEFDVVAVYNDVDDAKEQYEYVKEELEDELDNGNIKDYDIDRDGNIVVAKVIMSKEEFLGDYANKLGLNFGNEIKYNTENEYNTQTKEKSEFNHDNTNKVNKNINLEEPYNLIPNVFWASYVDVGKFSKVVKGKGVYDELNSILKCYGLSPDDVEFYMNLETANLIKTDKLTAKEYLKKLGYSYNEEYYGGATLLVYTTEVSDMVGKFAATNYKGYFIFGLKGGVEKVIDAINGKNNLVTEDENIREIINEMPKGYFAFKLYNQFDADGGEFYYDEGDKIVIKGLWICIDDEYAKKRKYIIENDYENYGYTDYNIEVDGNRVTTTLTIDKDEFGEYDGYTLVSSDWIGLKKLENCENVNEEEENQINEEQQTNVENEQQTEQQFENEDKETNTYELPLTWKELEVAGMDGVMFDFGNKKVTFEDWKYSPCEFRNPIIIDGNKIWCFGFSGGEYGYFTYNDNMGFDADVDDIILIEMPYNVKAVCDDFYGAGWFIEDDNGKLHHVIFDCPKETIMDKTGNVEIDLAKIKKDVVVANVDVDELMAGAEDNKNNYKIVIGWKGNKLYLITMEKDKFEDWAYNSKYEDGFDEPFPPVQIKEFEFNGNIIDARSDFRNYIIVATENGLYIITVYKREPDEFKITDSLKTNIECYAFDTGSGLLVYYDGSKVYYTDIKIKSESDNSDIYYIARNYEGGLNIDGVTGLSICHNYNWLGTQVEVAGDGWIKTYNIEFEAKKDAEGNSVYDENGNSIYIVKFEPKNVYYDEIYDKYYSISVPFAGKYIYRGDSGDSKNGRVEFRVYTTNNKLYLFGTNW.

The tract at residues 601–629 (ENQINEEQQTNVENEQQTEQQFENEDKET) is disordered. The segment covering 605–621 (NEEQQTNVENEQQTEQQ) has biased composition (low complexity).

This is an uncharacterized protein from Methanocaldococcus jannaschii (strain ATCC 43067 / DSM 2661 / JAL-1 / JCM 10045 / NBRC 100440) (Methanococcus jannaschii).